A 546-amino-acid chain; its full sequence is Chaperonin GroEL (546 aa).

ATP contacts are provided by residues 30–33 (TLGP), Lys51, 87–91 (DGTTT), Gly415, 479–481 (NAA), and Asp495. Residues 526 to 546 (KEEKPDLSGAGAGMGGMGGMM) are disordered. The span at 535 to 546 (AGAGMGGMGGMM) shows a compositional bias: gly residues.

Belongs to the chaperonin (HSP60) family. Forms a cylinder of 14 subunits composed of two heptameric rings stacked back-to-back. Interacts with the co-chaperonin GroES.

It localises to the cytoplasm. It carries out the reaction ATP + H2O + a folded polypeptide = ADP + phosphate + an unfolded polypeptide.. Its function is as follows. Together with its co-chaperonin GroES, plays an essential role in assisting protein folding. The GroEL-GroES system forms a nano-cage that allows encapsulation of the non-native substrate proteins and provides a physical environment optimized to promote and accelerate protein folding. In Wigglesworthia glossinidia brevipalpis, this protein is Chaperonin GroEL.